We begin with the raw amino-acid sequence, 527 residues long: Sensory neuron membrane protein 1 (527 aa).

At 1–10 the chain is on the cytoplasmic side; sequence MQLQKPLKIG. Residues 11 to 31 traverse the membrane as a helical segment; the sequence is LGMMGAGLFGIIFGWVLFPVI. Over 32–456 the chain is Extracellular; sequence LKSQLKKEMA…LKNQLFIPKR (425 aa). 2 N-linked (GlcNAc...) asparagine glycosylation sites follow: N67 and N229. 3 disulfides stabilise this stretch: C268–C333, C297–C352, and C335–C341. The N-linked (GlcNAc...) asparagine glycan is linked to N440. Residues 457 to 477 form a helical membrane-spanning segment; it reads IVSVVKWLLAGVGFVGLVGSL. Topologically, residues 478-527 are cytoplasmic; that stretch reads VYQFKGKMINFALSPSSAQVTKVNPEINQQNQPKDISIIGESQNPPKVDM.

The protein belongs to the CD36 family. As to expression, detected in both male and female antennal tissues. Expression is two to three fold higher in male compared to female antenna.

It is found in the cell membrane. In terms of biological role, plays an olfactory role that is not restricted to pheromone sensitivity. The polypeptide is Sensory neuron membrane protein 1 (Ostrinia furnacalis (Asian corn borer)).